The primary structure comprises 190 residues: Mitochondrial inner membrane protease subunit 1 (190 aa).

Residues Ser40 and Lys84 contribute to the active site.

The protein belongs to the peptidase S26 family. IMP1 subfamily. In terms of assembly, component of the mitochondrial inner membrane peptidase (IMP) complex which at least consists of IMP1, IMP2 and SOM1.

The protein resides in the mitochondrion inner membrane. In terms of biological role, catalytic component of the mitochondrial inner membrane peptidase (IMP) complex. IMP catalyzes the removal of signal peptides required for the targeting of proteins from the mitochondrial matrix, across the inner membrane, into the inter-membrane space. The two catalytic IMP subunits seem to have non-overlapping substrate specificities. IMP1 substrates include nuclear encoded CYB2, mitochondrially encoded COX2, NADH-cytochrome b5 reductase and GUT2. The polypeptide is Mitochondrial inner membrane protease subunit 1 (IMP1) (Saccharomyces cerevisiae (strain ATCC 204508 / S288c) (Baker's yeast)).